We begin with the raw amino-acid sequence, 242 residues long: Small ribosomal subunit protein uS2 (242 aa).

This sequence belongs to the universal ribosomal protein uS2 family.

This Shouchella clausii (strain KSM-K16) (Alkalihalobacillus clausii) protein is Small ribosomal subunit protein uS2.